A 255-amino-acid chain; its full sequence is Adenylate dimethylallyltransferase (255 aa).

It belongs to the isopentenyl transferase family.

The catalysed reaction is dimethylallyl diphosphate + AMP = N(6)-(dimethylallyl)adenosine 5'-phosphate + diphosphate. In terms of biological role, transfers dimethylallyl groups to AMP as part of the biosynthesis of cytokinin phytohormones. This Rhodococcoides fascians (Rhodococcus fascians) protein is Adenylate dimethylallyltransferase (fas4).